Consider the following 202-residue polypeptide: Putative NADH dehydrogenase/NAD(P)H nitroreductase SCO7141 (202 aa).

It belongs to the nitroreductase family. HadB/RutE subfamily. The cofactor is FMN.

The polypeptide is Putative NADH dehydrogenase/NAD(P)H nitroreductase SCO7141 (Streptomyces coelicolor (strain ATCC BAA-471 / A3(2) / M145)).